The sequence spans 440 residues: Microtubule-associated tumor suppressor 1 homolog A (440 aa).

The segment at 44–67 (KSRTNSKNPQPPTNGQPDLVPPES) is disordered. The stretch at 69–401 (SRNVEYYKAQ…RLSMENEELL (333 aa)) forms a coiled coil. A disordered region spans residues 407-440 (GDLNSPRKISPSPSLNLQSPRTSGMFSSPPVSPR). Residues 417–432 (PSPSLNLQSPRTSGMF) show a composition bias toward polar residues.

It belongs to the MTUS1 family. As to quaternary structure, homodimer.

It localises to the mitochondrion. The protein localises to the golgi apparatus. It is found in the cell membrane. The protein resides in the nucleus. In terms of biological role, may inhibit cell proliferation. This Danio rerio (Zebrafish) protein is Microtubule-associated tumor suppressor 1 homolog A (mtus1a).